The primary structure comprises 761 residues: Xaa-Pro dipeptidyl-peptidase (761 aa).

Residues Ser-347, Asp-467, and His-497 each act as charge relay system in the active site.

It belongs to the peptidase S15 family. As to quaternary structure, homodimer.

The protein localises to the cytoplasm. The enzyme catalyses Hydrolyzes Xaa-Pro-|- bonds to release unblocked, N-terminal dipeptides from substrates including Ala-Pro-|-p-nitroanilide and (sequentially) Tyr-Pro-|-Phe-Pro-|-Gly-Pro-|-Ile.. Removes N-terminal dipeptides sequentially from polypeptides having unsubstituted N-termini provided that the penultimate residue is proline. In Streptococcus agalactiae serotype III (strain NEM316), this protein is Xaa-Pro dipeptidyl-peptidase.